The following is a 121-amino-acid chain: Large ribosomal subunit protein bL12 (121 aa).

It belongs to the bacterial ribosomal protein bL12 family. As to quaternary structure, homodimer. Part of the ribosomal stalk of the 50S ribosomal subunit. Forms a multimeric L10(L12)X complex, where L10 forms an elongated spine to which 2 to 4 L12 dimers bind in a sequential fashion. Binds GTP-bound translation factors.

Its function is as follows. Forms part of the ribosomal stalk which helps the ribosome interact with GTP-bound translation factors. Is thus essential for accurate translation. This chain is Large ribosomal subunit protein bL12, found in Salmonella agona (strain SL483).